Consider the following 259-residue polypeptide: Adenosylcobinamide-GDP ribazoletransferase (259 aa).

7 helical membrane-spanning segments follow: residues 41 to 61, 67 to 87, 119 to 139, 148 to 168, 179 to 199, 200 to 220, and 237 to 257; these read AAIW…AIVF, FGLA…IATG, IGAY…NVLS, LFAL…FMHL, AGAG…GAIP, LLLL…LLFA, and TIGA…SVAL.

This sequence belongs to the CobS family. It depends on Mg(2+) as a cofactor.

The protein resides in the cell inner membrane. It catalyses the reaction alpha-ribazole + adenosylcob(III)inamide-GDP = adenosylcob(III)alamin + GMP + H(+). The catalysed reaction is alpha-ribazole 5'-phosphate + adenosylcob(III)inamide-GDP = adenosylcob(III)alamin 5'-phosphate + GMP + H(+). The protein operates within cofactor biosynthesis; adenosylcobalamin biosynthesis; adenosylcobalamin from cob(II)yrinate a,c-diamide: step 7/7. Its function is as follows. Joins adenosylcobinamide-GDP and alpha-ribazole to generate adenosylcobalamin (Ado-cobalamin). Also synthesizes adenosylcobalamin 5'-phosphate from adenosylcobinamide-GDP and alpha-ribazole 5'-phosphate. In Mesorhizobium japonicum (strain LMG 29417 / CECT 9101 / MAFF 303099) (Mesorhizobium loti (strain MAFF 303099)), this protein is Adenosylcobinamide-GDP ribazoletransferase.